Here is a 261-residue protein sequence, read N- to C-terminus: MTHQAHAYHMVDPSPWPLTGAVAALLMTSGLAVWFHFHSTTLMALGTVLLLLTMYQWWRDIIREGTFQGHHTPPVQKGLRYGMILFITSEVFFFLGFFWAFYHASLAPTPELGGCWPPTGITTLDPFEVPLLNTAVLLASGVTVTWAHHSIMEGERKQAIHSLTLTILLGFYFTFLQGLEYYDAPFTIADGVYGSTFFVATGFHGLHVIIGSTFLAVCLLRQIRYHFTSEHHFGFEAAAWYWHFVDVVWLFLYISIYWWGS.

The Mitochondrial matrix segment spans residues 1-15 (MTHQAHAYHMVDPSP). A helical membrane pass occupies residues 16–34 (WPLTGAVAALLMTSGLAVW). The Mitochondrial intermembrane segment spans residues 35–40 (FHFHST). The helical transmembrane segment at 41–66 (TLMALGTVLLLLTMYQWWRDIIREGT) threads the bilayer. At 67 to 72 (FQGHHT) the chain is on the mitochondrial matrix side. A helical transmembrane segment spans residues 73-105 (PPVQKGLRYGMILFITSEVFFFLGFFWAFYHAS). The Mitochondrial intermembrane portion of the chain corresponds to 106–128 (LAPTPELGGCWPPTGITTLDPFE). Residues 129–152 (VPLLNTAVLLASGVTVTWAHHSIM) traverse the membrane as a helical segment. Residues 153–155 (EGE) are Mitochondrial matrix-facing. The chain crosses the membrane as a helical span at residues 156–183 (RKQAIHSLTLTILLGFYFTFLQGLEYYD). Over 184–190 (APFTIAD) the chain is Mitochondrial intermembrane. A helical membrane pass occupies residues 191 to 223 (GVYGSTFFVATGFHGLHVIIGSTFLAVCLLRQI). At 224–232 (RYHFTSEHH) the chain is on the mitochondrial matrix side. The helical transmembrane segment at 233 to 256 (FGFEAAAWYWHFVDVVWLFLYISI) threads the bilayer. Residues 257-261 (YWWGS) are Mitochondrial intermembrane-facing.

It belongs to the cytochrome c oxidase subunit 3 family. In terms of assembly, component of the cytochrome c oxidase (complex IV, CIV), a multisubunit enzyme composed of 14 subunits. The complex is composed of a catalytic core of 3 subunits MT-CO1, MT-CO2 and MT-CO3, encoded in the mitochondrial DNA, and 11 supernumerary subunits COX4I, COX5A, COX5B, COX6A, COX6B, COX6C, COX7A, COX7B, COX7C, COX8 and NDUFA4, which are encoded in the nuclear genome. The complex exists as a monomer or a dimer and forms supercomplexes (SCs) in the inner mitochondrial membrane with NADH-ubiquinone oxidoreductase (complex I, CI) and ubiquinol-cytochrome c oxidoreductase (cytochrome b-c1 complex, complex III, CIII), resulting in different assemblies (supercomplex SCI(1)III(2)IV(1) and megacomplex MCI(2)III(2)IV(2)).

Its subcellular location is the mitochondrion inner membrane. The catalysed reaction is 4 Fe(II)-[cytochrome c] + O2 + 8 H(+)(in) = 4 Fe(III)-[cytochrome c] + 2 H2O + 4 H(+)(out). In terms of biological role, component of the cytochrome c oxidase, the last enzyme in the mitochondrial electron transport chain which drives oxidative phosphorylation. The respiratory chain contains 3 multisubunit complexes succinate dehydrogenase (complex II, CII), ubiquinol-cytochrome c oxidoreductase (cytochrome b-c1 complex, complex III, CIII) and cytochrome c oxidase (complex IV, CIV), that cooperate to transfer electrons derived from NADH and succinate to molecular oxygen, creating an electrochemical gradient over the inner membrane that drives transmembrane transport and the ATP synthase. Cytochrome c oxidase is the component of the respiratory chain that catalyzes the reduction of oxygen to water. Electrons originating from reduced cytochrome c in the intermembrane space (IMS) are transferred via the dinuclear copper A center (CU(A)) of subunit 2 and heme A of subunit 1 to the active site in subunit 1, a binuclear center (BNC) formed by heme A3 and copper B (CU(B)). The BNC reduces molecular oxygen to 2 water molecules using 4 electrons from cytochrome c in the IMS and 4 protons from the mitochondrial matrix. In Gadus morhua (Atlantic cod), this protein is Cytochrome c oxidase subunit 3 (mt-co3).